A 730-amino-acid polypeptide reads, in one-letter code: GTPase-activating protein GYP7 (730 aa).

The Rab-GAP TBC domain maps to 434–619; sequence VQEDKERDDF…RLWEVLWTDY (186 aa).

In terms of biological role, most effectively accelerate the intrinsic GTPase activity of YPT7. It is also active, but to a lesser extent, on YPT31, YPT32 and YPT1. YPT6 and SEC4. The protein is GTPase-activating protein GYP7 (GYP7) of Yarrowia lipolytica (strain CLIB 122 / E 150) (Yeast).